We begin with the raw amino-acid sequence, 617 residues long: MSPQRDRINAFDKDNPHPXXXXXXXXXXXXXXXRPYVLLAVLFVMFLSLIGLLAIAGIRFHRAAIYTAEIHKSLSTNLDVTNSIEHQVKDVLTPLFKIIGDEVGLRTPQRFTDLVKFISDKIKFLNPDREYDFRDLTWCINPPERIKLDYDQYCADVAAEELMNALVNSTLLETRTTNQFLAVSKGNCSGPTTIRGQFSNMSLSLLDLYLSRSYNVSSIVTMTSQGMHGGTYLVGKPNLSNKGSELSQLSMYRVFEVGVIRNPGLGAPVFHMTNYFEQPVSNDLSNCMVALGELKLAALCHGEDSITIPYQGSGKGVSIQLVKLGVWKSPTDMQSWVPLSTDDPVIDRLYLSSHRGVIADNQAKWAVPTTRTDDKLRMETCFQQACRGEVQALCEDPEWAPLKDGRIPSYGVLSVDLSLTVELKIKIASGFGPLITRGSGMDLYRSNHNNVCWLAVPPMKSLALGVVNTLEWMPGFKVGPYLFTVPIKEAGEDCHAPAYLPAEVDGDVKLSSNLVILPGQDLQYVLATYDTSRVEHAVVYYVYSPGRSFSYFYPFRLPIKGVPIELQVECFTWDQKLWCRHFCVLADSESGGHITHSGMVGMGVSCTVTREDGTNCR.

At 1 to 37 the chain is on the intravirion side; that stretch reads MSPQRDRINAFDKDNPHPXXXXXXXXXXXXXXXRPYV. Positions 1-154 are stalk; sequence MSPQRDRINA…RIKLDYDQYC (154 aa). A helical; Signal-anchor for type II membrane protein transmembrane segment spans residues 38–58; the sequence is LLAVLFVMFLSLIGLLAIAGI. Residues 59–617 are Virion surface-facing; sequence RFHRAAIYTA…VTREDGTNCR (559 aa). Asn-168, Asn-187, Asn-200, Asn-215, and Asn-238 each carry an N-linked (GlcNAc...) asparagine; by host glycan. 5 disulfide bridges follow: Cys-188–Cys-606, Cys-287–Cys-300, Cys-381–Cys-494, Cys-386–Cys-394, and Cys-570–Cys-579. Residues 458-543 are interaction with host NECTIN4 receptor; the sequence is PMKSLALGVV…VEHAVVYYVY (86 aa).

Belongs to the paramyxoviruses hemagglutinin-neuraminidase family. Non-sialidase subfamily. In terms of assembly, homodimer; disulfide-linked. Further forms homotetramer (dimer of dimers). Interacts (via C-terminus) with human NECTIN4 (via N-terminus); this interaction allows attachment to the respiratory epithelium and viral entry. Interacts (via C-terminus) with human SLAMF1/CD150 (via N-terminus); this interaction allows attachment and viral entry into the CD150-expressing immune cells.

It is found in the virion membrane. The protein localises to the host cell membrane. Functionally, attaches the virus to the human SLAMF1/CD150 receptor for entry into host dendritic cells, macrophages, activated memory T cells and naive or memory B cells, thereby explaining the long immunosuppression that follows infection. In the respiratory airways, binds to the NECTIN4 receptor for entry into the host cell. Binding of H protein to the receptor induces a conformational change that allows the F protein to trigger virion/cell membranes fusion. The vaccine and laboratory-adapted strains use host CD46 as an alternate receptor. The high degree of interaction between H and CD46 results in down-regulation of the latter from the surface of infected cells, rendering them more sensitive to c3b-mediated complement lysis. This is Hemagglutinin glycoprotein (H) from Homo sapiens (Human).